We begin with the raw amino-acid sequence, 164 residues long: MNKEPMSMHGYNKICAELKQLKEVERPNIVKEIDIARGHGDLKENAEYHAAKEKQRFIEARIVDLSEIIANAQVIDPSVLAHNKVSFGSTIKILNLDNDKEFSYTIVGSVESDPSKGLISFGSPIAKSLIGKSKGDAVSIQLPNGESDFEILDIYYKEICFDEN.

This sequence belongs to the GreA/GreB family.

In terms of biological role, necessary for efficient RNA polymerase transcription elongation past template-encoded arresting sites. The arresting sites in DNA have the property of trapping a certain fraction of elongating RNA polymerases that pass through, resulting in locked ternary complexes. Cleavage of the nascent transcript by cleavage factors such as GreA or GreB allows the resumption of elongation from the new 3'terminus. GreA releases sequences of 2 to 3 nucleotides. The polypeptide is Transcription elongation factor GreA (Helicobacter pylori (strain Shi470)).